Consider the following 590-residue polypeptide: uncharacterized protein (590 aa).

2 disordered regions span residues 306–329 (IAEP…GIPY) and 528–590 (QPAP…LMNL). Residues 543–563 (PSLPQPVPEPLAPQEPPPPGT) show a composition bias toward pro residues.

This is an uncharacterized protein from Ictaluridae (bullhead catfishes).